Here is a 246-residue protein sequence, read N- to C-terminus: DNA polymerase sliding clamp (246 aa).

It belongs to the PCNA family. In terms of assembly, homotrimer. The subunits circularize to form a toroid; DNA passes through its center. Replication factor C (RFC) is required to load the toroid on the DNA.

Sliding clamp subunit that acts as a moving platform for DNA processing. Responsible for tethering the catalytic subunit of DNA polymerase and other proteins to DNA during high-speed replication. This chain is DNA polymerase sliding clamp, found in Thermoplasma acidophilum (strain ATCC 25905 / DSM 1728 / JCM 9062 / NBRC 15155 / AMRC-C165).